The chain runs to 458 residues: UDP-N-acetylmuramate--L-alanine ligase (458 aa).

115–121 contacts ATP; the sequence is GSHGKTT.

The protein belongs to the MurCDEF family.

The protein resides in the cytoplasm. It carries out the reaction UDP-N-acetyl-alpha-D-muramate + L-alanine + ATP = UDP-N-acetyl-alpha-D-muramoyl-L-alanine + ADP + phosphate + H(+). The protein operates within cell wall biogenesis; peptidoglycan biosynthesis. Functionally, cell wall formation. The polypeptide is UDP-N-acetylmuramate--L-alanine ligase (Anaeromyxobacter dehalogenans (strain 2CP-1 / ATCC BAA-258)).